Here is a 290-residue protein sequence, read N- to C-terminus: Lipoyl synthase (290 aa).

Residues Cys-44, Cys-49, Cys-55, Cys-70, Cys-74, Cys-77, and Ser-282 each coordinate [4Fe-4S] cluster. The Radical SAM core domain occupies 56-271 (WGEGTATFMI…ELLGKEMGFR (216 aa)).

It belongs to the radical SAM superfamily. Lipoyl synthase family. The cofactor is [4Fe-4S] cluster.

The protein resides in the cytoplasm. The catalysed reaction is [[Fe-S] cluster scaffold protein carrying a second [4Fe-4S](2+) cluster] + N(6)-octanoyl-L-lysyl-[protein] + 2 oxidized [2Fe-2S]-[ferredoxin] + 2 S-adenosyl-L-methionine + 4 H(+) = [[Fe-S] cluster scaffold protein] + N(6)-[(R)-dihydrolipoyl]-L-lysyl-[protein] + 4 Fe(3+) + 2 hydrogen sulfide + 2 5'-deoxyadenosine + 2 L-methionine + 2 reduced [2Fe-2S]-[ferredoxin]. Its pathway is protein modification; protein lipoylation via endogenous pathway; protein N(6)-(lipoyl)lysine from octanoyl-[acyl-carrier-protein]: step 2/2. Catalyzes the radical-mediated insertion of two sulfur atoms into the C-6 and C-8 positions of the octanoyl moiety bound to the lipoyl domains of lipoate-dependent enzymes, thereby converting the octanoylated domains into lipoylated derivatives. In Flavobacterium psychrophilum (strain ATCC 49511 / DSM 21280 / CIP 103535 / JIP02/86), this protein is Lipoyl synthase.